The chain runs to 692 residues: MSRTLFVTTALPYANGSFHIGHIMEYIQADIWVRSMRMAGHTVHFVGADDAHGAPIMLKAEKEGITPQALVARYAAERPRYLDGFHIRFDHWHSTDTPENVALSQEIYRALKSEGLIETRSIEQFYDPVKGMFLADRYIKGECPRCHAKDQYGDSCEVCGAVYAPTELINPYSALTGAAPVLKSSDHFFFKLSDPRCVEFLQQWTTGANRQGVKHLQAEVQAKTREWLGGDDGEAKLGDWDISRDAPYFGIEIPDAPGKYFYVWLDAPVGYLASLKSYCAVKGLDFDALLDPAGPTEQVHFIGKDIIYFHALFWPAMLKFAGRKTPDQLNVHGFITVSGEKMSKSRGTGISPLRYLEIGMDAEWLRYYMAAKLNARVEDMDFNPEDFVARVNSDLVGKYVNIASRAAAFITRHFDGELAYDGDTDALAAEFAQQAESIRAAFEAREYNRAVREIMAHADRINQAFDAAQPWVMAKGIGAADAATRARLQDICSRALAGFKALSVMLAPVLPALASRVARELFGANADFAWGDAQQLPQRVAPFKHLMQRVDPKLLDDLFEPPAAEASAPAALPGGEALADTITIDDFAKIDLRIARIVNCEEVEGSTKLLRLTLDVGEGRHRNVFSGIKSAYQPQDLVGKLTVLVANLAPRKMKFGVSEGMVLAASHADEKAEPGIYVLEPWPGAQPGMRVR.

Positions 12-22 match the 'HIGH' region motif; it reads PYANGSFHIGH. Residues Cys-143, Cys-146, Cys-156, and Cys-159 each contribute to the Zn(2+) site. The short motif at 341-345 is the 'KMSKS' region element; the sequence is KMSKS. Lys-344 is an ATP binding site. One can recognise a tRNA-binding domain in the interval 586 to 692; it reads DFAKIDLRIA…PGAQPGMRVR (107 aa).

Belongs to the class-I aminoacyl-tRNA synthetase family. MetG type 1 subfamily. Homodimer. Zn(2+) is required as a cofactor.

Its subcellular location is the cytoplasm. It carries out the reaction tRNA(Met) + L-methionine + ATP = L-methionyl-tRNA(Met) + AMP + diphosphate. Is required not only for elongation of protein synthesis but also for the initiation of all mRNA translation through initiator tRNA(fMet) aminoacylation. The protein is Methionine--tRNA ligase of Bordetella bronchiseptica (strain ATCC BAA-588 / NCTC 13252 / RB50) (Alcaligenes bronchisepticus).